Here is a 1011-residue protein sequence, read N- to C-terminus: MVAAHAAHSQSSAEWIACLDKRPLERSSEDVDIIFTRLKGVKAFEKFHPNLLRQICLCGYYENLEKGITLFRQGDIGTNWYAVLAGSLDVKVSETSSHQDAVTICTLGIGTAFGESILDNTPRHATIVTRESSELLRIEQEDFKALWEKYRQYMAGLLAPPYGVMETGSNNDRIPDKENTPLIEPHVPLRPAHTITKVPSEKILRAGKILRIAILSRAPHMIRDRKYHLKTYRQCCVGTELVDWMIQQTSCVHSRTQAVGMWQVLLEDGVLNHVDQERHFQDKYLFYRFLDDEREDAPLPTEEEKKECDEELQDTMLLLSQMGPDAHMRMILRKPPGQRTVDDLEIIYDELLHIKALSHLSTTVKRELAGVLIFESHAKGGTVLFNQGEEGTSWYIILKGSVNVVIYGKGVVCTLHEGDDFGKLALVNDAPRAASIVLREDNCHFLRVDKEDFNRILRDVEANTVRLKEHDQDVLVLEKVPAGNRAANQGNSQPQQKYTVMSGTPEKILEHFLETIRLEPSLNEATDSVLNDFVMMHCVFMPNTQLCPALVAHYHAQPSQGTEQERMDYALNNKRRVIRLVLQWAAMYGDLLQEDDVAMAFLEEFYVSVSDDARMMAAFKEQLPELEKIVKQISEDAKAPQKKHKVLLQQFNTGDERAQKRQPIRGSDEVLFKVYCIDHTYTTIRVPVAASVKEVISAVADKLGSGEGLIIVKMNSGGEKVVLKSNDVSVFTTLTINGRLFACPREQFDSLTPLPEQEGPTTGTVGTFELMSSKDLAYQMTTYDWELFNCVHELELIYHTFGRHNFKKTTANLDLFLRRFNEIQFWVVTEVCLCSQLSKRVQLLKKFIKIAAHCKEYKNLNSFFAIVMGLSNVAVSRLALTWEKLPSKFKKFYAEFESLMDPSRNHRAYRLTAAKLEPPLIPFMPLLIKDMTFTHEGNKTFIDNLVNFEKMRMIANTARTVRYYRSQPFNPDAAQANKNHQDVRSYVRQLNVIDNQRTLSQMSHRLEPRRP.

Positions 216–291 (SRAPHMIRDR…DKYLFYRFLD (76 aa)) constitute a DEP domain. Residues 422–425 (GKLA) and 432–433 (RA) contribute to the 3',5'-cyclic AMP site. In terms of domain architecture, N-terminal Ras-GEF spans 496–634 (QKYTVMSGTP…ELEKIVKQIS (139 aa)). The region spanning 772–1009 (SSKDLAYQMT…SQMSHRLEPR (238 aa)) is the Ras-GEF domain.

As to quaternary structure, interacts with RAP1B, RIMS1 and RIMS2. Probably part of a complex with RIMS2 and GTP-activated RAB3A. As to expression, expressed in cerebellum, pituitary, adrenal gland and liver.

The protein resides in the cytoplasm. It localises to the membrane. In terms of biological role, guanine nucleotide exchange factor (GEF) for RAP1A, RAP1B and RAP2A small GTPases that is activated by binding cAMP. Seems not to activate RAB3A. Involved in cAMP-dependent, PKA-independent exocytosis through interaction with RIMS2. In Mus musculus (Mouse), this protein is Rap guanine nucleotide exchange factor 4 (Rapgef4).